The following is a 91-amino-acid chain: Proline, histidine and glycine-rich protein 1 (91 aa).

The disordered stretch occupies residues 1–91 (MHPGGKGHCG…HCGPHPGPHH (91 aa)). Gly residues-rich tracts occupy residues 33–42 (HPGHGPGHCP), 49–63 (GHGG…GHCP), and 70–82 (GHGG…GPGH).

The sequence is that of Proline, histidine and glycine-rich protein 1 (Phgr1) from Mus musculus (Mouse).